The chain runs to 440 residues: Glycerol-3-phosphate dehydrogenase [NAD(+)], chloroplastic (440 aa).

Residues 1 to 47 (MAAAAAATFLPHTPTPRRRLAVAVHSPTRRRLSLVFSGPPDGALSVA) constitute a chloroplast transit peptide. The segment at 57–76 (EEAAAAVSAPRGGGGGGGKE) is disordered. NAD(+) is bound by residues 114–119 (GGGSFG), phenylalanine 191, lysine 214, and alanine 248. Residue lysine 214 coordinates substrate. The Proton acceptor role is filled by lysine 299. NAD(+) is bound by residues arginine 363 and glutamate 389. 363–364 (RN) lines the substrate pocket.

This sequence belongs to the NAD-dependent glycerol-3-phosphate dehydrogenase family.

It is found in the plastid. The protein localises to the chloroplast. It carries out the reaction sn-glycerol 3-phosphate + NAD(+) = dihydroxyacetone phosphate + NADH + H(+). It functions in the pathway membrane lipid metabolism; glycerophospholipid metabolism. Functionally, required to supply glycerol-3-phosphate in the chloroplast for the synthesis of glycerolipids. The protein is Glycerol-3-phosphate dehydrogenase [NAD(+)], chloroplastic of Oryza sativa subsp. japonica (Rice).